The chain runs to 489 residues: Glutamyl-tRNA(Gln) amidotransferase subunit A (489 aa).

Catalysis depends on charge relay system residues Lys78 and Ser153. Ser177 serves as the catalytic Acyl-ester intermediate.

This sequence belongs to the amidase family. GatA subfamily. Heterotrimer of A, B and C subunits.

The catalysed reaction is L-glutamyl-tRNA(Gln) + L-glutamine + ATP + H2O = L-glutaminyl-tRNA(Gln) + L-glutamate + ADP + phosphate + H(+). Allows the formation of correctly charged Gln-tRNA(Gln) through the transamidation of misacylated Glu-tRNA(Gln) in organisms which lack glutaminyl-tRNA synthetase. The reaction takes place in the presence of glutamine and ATP through an activated gamma-phospho-Glu-tRNA(Gln). In Enterococcus faecalis (strain ATCC 700802 / V583), this protein is Glutamyl-tRNA(Gln) amidotransferase subunit A.